A 235-amino-acid polypeptide reads, in one-letter code: MNKIAGTLFLLAGLAMAGCTTTEELGKPPALSPVGSGAEPTAMQAYHYPDRRQAHVSRYSLWSDRQSRLFTDPRALEVGDILTVVISINDKAKFENESERSRQATRNLGLAGTFAIGSATGSAEADADIGSGTSTVGSGATKRSEDMRLVIAAIVTERLPNGNLRISGTQEVRVNAELRVLTIAGLVRPADIGPNNTISYERIAEARISYGGRGRLTEVQQPPYGQQFLDTVLPF.

An N-terminal signal peptide occupies residues 1–18 (MNKIAGTLFLLAGLAMAG). Cys-19 carries the N-palmitoyl cysteine lipid modification. The S-diacylglycerol cysteine moiety is linked to residue Cys-19.

This sequence belongs to the FlgH family. As to quaternary structure, the basal body constitutes a major portion of the flagellar organelle and consists of four rings (L,P,S, and M) mounted on a central rod.

The protein resides in the cell outer membrane. Its subcellular location is the bacterial flagellum basal body. Functionally, assembles around the rod to form the L-ring and probably protects the motor/basal body from shearing forces during rotation. This is Flagellar L-ring protein from Chelativorans sp. (strain BNC1).